A 267-amino-acid polypeptide reads, in one-letter code: Octanoyltransferase (267 aa).

The segment at 1–30 (MPTGKLRQKPPYAAIMTNSPVTPSTETQQP) is disordered. A compositionally biased stretch (polar residues) spans 16–28 (MTNSPVTPSTETQ). Positions 77–265 (GTASELVWLV…AFESVFGPRQ (189 aa)) constitute a BPL/LPL catalytic domain. Substrate-binding positions include 116-123 (RGGEYTYH), 196-198 (AIG), and 209-211 (GIA). The Acyl-thioester intermediate role is filled by C227.

The protein belongs to the LipB family.

The protein resides in the cytoplasm. It carries out the reaction octanoyl-[ACP] + L-lysyl-[protein] = N(6)-octanoyl-L-lysyl-[protein] + holo-[ACP] + H(+). The protein operates within protein modification; protein lipoylation via endogenous pathway; protein N(6)-(lipoyl)lysine from octanoyl-[acyl-carrier-protein]: step 1/2. Catalyzes the transfer of endogenously produced octanoic acid from octanoyl-acyl-carrier-protein onto the lipoyl domains of lipoate-dependent enzymes. Lipoyl-ACP can also act as a substrate although octanoyl-ACP is likely to be the physiological substrate. The polypeptide is Octanoyltransferase (Brucella abortus biovar 1 (strain 9-941)).